The primary structure comprises 238 residues: Type III secretion protein hrcQa (238 aa).

Positions 66-238 are hrcQa-C; sequence DAEALLSLLG…SHEEHRHHEY (173 aa).

As to quaternary structure, interacts with hrcQb.

It is found in the cell inner membrane. Component of the type III secretion system, which is required for effector protein delivery, parasitism, and pathogenicity. Probably participates in the formation of a C-ring-like assembly along with hrcQb. The chain is Type III secretion protein hrcQa (hrcQa) from Pseudomonas savastanoi pv. phaseolicola (Pseudomonas syringae pv. phaseolicola).